Here is a 277-residue protein sequence, read N- to C-terminus: Large ribosomal subunit protein uL2 (277 aa).

Disordered stretches follow at residues 1-20 (MAVK…TTAD) and 210-277 (GRSR…RGGK). Positions 210–221 (GRSRWLGRKPHQ) are enriched in basic residues.

The protein belongs to the universal ribosomal protein uL2 family. Part of the 50S ribosomal subunit. Forms a bridge to the 30S subunit in the 70S ribosome.

Its function is as follows. One of the primary rRNA binding proteins. Required for association of the 30S and 50S subunits to form the 70S ribosome, for tRNA binding and peptide bond formation. It has been suggested to have peptidyltransferase activity; this is somewhat controversial. Makes several contacts with the 16S rRNA in the 70S ribosome. This chain is Large ribosomal subunit protein uL2, found in Deinococcus deserti (strain DSM 17065 / CIP 109153 / LMG 22923 / VCD115).